The following is a 124-amino-acid chain: Small ribosomal subunit protein uS12 (124 aa).

Position 89 is a 3-methylthioaspartic acid (Asp89). Residues Gln105–Ser124 form a disordered region. Residues Lys108–Gly118 show a composition bias toward basic residues.

Belongs to the universal ribosomal protein uS12 family. As to quaternary structure, part of the 30S ribosomal subunit. Contacts proteins S8 and S17. May interact with IF1 in the 30S initiation complex.

With S4 and S5 plays an important role in translational accuracy. In terms of biological role, interacts with and stabilizes bases of the 16S rRNA that are involved in tRNA selection in the A site and with the mRNA backbone. Located at the interface of the 30S and 50S subunits, it traverses the body of the 30S subunit contacting proteins on the other side and probably holding the rRNA structure together. The combined cluster of proteins S8, S12 and S17 appears to hold together the shoulder and platform of the 30S subunit. This Mycobacterium sp. (strain JLS) protein is Small ribosomal subunit protein uS12.